Consider the following 357-residue polypeptide: RGG repeats nuclear RNA binding protein C (357 aa).

A2 bears the N-acetylalanine mark. Residues 25–232 are disordered; the sequence is SQKVEKAAAA…AEEAEAREMT (208 aa). Over residues 31–45 the composition is skewed to low complexity; the sequence is AAAAVQPPKAAKFPT. Gly residues-rich tracts occupy residues 63–82 and 114–128; these read GGRG…GNGG and SRGG…GGGR. Residues 143–155 are compositionally biased toward basic and acidic residues; sequence DVERPPRNYDRHS. Residues 159–172 are compositionally biased toward gly residues; sequence HGTGMKRNGGGRGN. A compositionally biased stretch (basic and acidic residues) spans 190 to 232; it reads EVEKSPVAEKQGGEDETPEAKKELTAEEKAQKEAEEAEAREMT. The FF domain occupies 239–299; sequence ILEEKKKALQ…KDATEKAKKS (61 aa). Residues 308-357 form a disordered region; sequence PADGKRYNGRGGGSRGRGGRGGRGEGGNQRYAKEAAAPAIGDTAQFPSLG. A compositionally biased stretch (gly residues) spans 316–334; it reads GRGGGSRGRGGRGGRGEGG. The residue at position 355 (S355) is a Phosphoserine.

It belongs to the SERBP1-HABP4 family.

Its subcellular location is the nucleus. It is found in the cytoplasm. The protein localises to the perinuclear region. Functionally, ribosome-binding protein that acts as a regulator of mRNA translation by promoting ribosome inactivation. Binds RNA. This chain is RGG repeats nuclear RNA binding protein C, found in Arabidopsis thaliana (Mouse-ear cress).